A 384-amino-acid chain; its full sequence is Neuropeptide Y receptor type 2 (384 aa).

Residues 1-54 are Extracellular-facing; the sequence is MKMGPLGAEADENQTVEEMKVDQFGPGHTTLPGELAPDSEPELIDSTKLIEVQV. N-linked (GlcNAc...) asparagine glycosylation occurs at N13. Residues 55–75 form a helical membrane-spanning segment; that stretch reads VLILAYCSIILLGVIGNSLVI. Over 76–89 the chain is Cytoplasmic; the sequence is HVVIKFKSMRTVTN. A helical membrane pass occupies residues 90-110; sequence FFIANLAVADLLVNTLCLPFT. The Extracellular segment spans residues 111–127; that stretch reads LTYTLMGEWKMGPVLCH. A disulfide bridge links C126 with C206. The helical transmembrane segment at 128–148 threads the bilayer; the sequence is LVPYAQGLAVQVSTITLTVIA. The Cytoplasmic segment spans residues 149–168; sequence LDRHRCIVYHLESKISKQIS. The helical transmembrane segment at 169–189 threads the bilayer; the sequence is FLIIGLAWGVSALLASPLAIF. Topologically, residues 190–219 are extracellular; it reads REYSLIEIIPDFEIVACTEKWPGEEKGIYG. A helical membrane pass occupies residues 220–240; sequence TIYSLSSLLILYVLPLGIISF. Topologically, residues 241–271 are cytoplasmic; it reads SYTRIWSKLKNHVSPGAAHDHYHQRRQKTTK. Residues 272–292 form a helical membrane-spanning segment; the sequence is MLVCVVVVFAVSWLPLHAFQL. Topologically, residues 293–307 are extracellular; sequence AVDIDSHVLDLKEYK. Residues 308-328 form a helical membrane-spanning segment; the sequence is LIFTVFHIIAMCSTFANPLLY. The Cytoplasmic segment spans residues 329–384; that stretch reads GWMNSNYRKAFLSAFRCEQRLDAIHSEVSVTFKAKKHLQVTKNNGPNDSFTETTNV. The S-palmitoyl cysteine moiety is linked to residue C345.

It belongs to the G-protein coupled receptor 1 family.

The protein resides in the cell membrane. Receptor for neuropeptide Y and peptide YY. The protein is Neuropeptide Y receptor type 2 (NPY2R) of Bos taurus (Bovine).